Here is a 258-residue protein sequence, read N- to C-terminus: Acyl-[acyl-carrier-protein]--UDP-N-acetylglucosamine O-acyltransferase (258 aa).

Belongs to the transferase hexapeptide repeat family. LpxA subfamily. As to quaternary structure, homotrimer.

The protein localises to the cytoplasm. It carries out the reaction a (3R)-hydroxyacyl-[ACP] + UDP-N-acetyl-alpha-D-glucosamine = a UDP-3-O-[(3R)-3-hydroxyacyl]-N-acetyl-alpha-D-glucosamine + holo-[ACP]. It participates in glycolipid biosynthesis; lipid IV(A) biosynthesis; lipid IV(A) from (3R)-3-hydroxytetradecanoyl-[acyl-carrier-protein] and UDP-N-acetyl-alpha-D-glucosamine: step 1/6. Functionally, involved in the biosynthesis of lipid A, a phosphorylated glycolipid that anchors the lipopolysaccharide to the outer membrane of the cell. In Pseudomonas syringae pv. tomato (strain ATCC BAA-871 / DC3000), this protein is Acyl-[acyl-carrier-protein]--UDP-N-acetylglucosamine O-acyltransferase.